A 416-amino-acid chain; its full sequence is Adipocyte plasma membrane-associated protein (416 aa).

Positions 1–32 (MSEADGLRQRRPLRPQVVTDDDGQAPEAKDGS) are disordered. Position 2 is an N-acetylserine (Ser2). The Cytoplasmic portion of the chain corresponds to 2–40 (SEADGLRQRRPLRPQVVTDDDGQAPEAKDGSSFSGRVFR). Thr19 carries the phosphothreonine modification. The helical; Signal-anchor for type II membrane protein transmembrane segment at 41–61 (VTFLMLAVSLTVPLLGAMMLL) threads the bilayer. The Extracellular portion of the chain corresponds to 62-416 (ESPIDPQPLS…FLCRLSLQAV (355 aa)). 2 N-linked (GlcNAc...) asparagine glycosylation sites follow: Asn160 and Asn196.

It belongs to the strictosidine synthase family. As to expression, liver, glomerular and tubular structures of the kidney, endothelial cells, arterial wall and pancreatic islets of Langerhans (at protein level). Found ubiquitously in adult as well as in embryonic tissues. In adult tissue, the highest expression is found in the liver, placenta and heart. Found on the cell surface of monocytes. In embryonic tissue, the highest expression levels is found in the liver and the kidney.

It localises to the membrane. Functionally, exhibits strong arylesterase activity with beta-naphthyl acetate and phenyl acetate. May play a role in adipocyte differentiation. The protein is Adipocyte plasma membrane-associated protein (APMAP) of Homo sapiens (Human).